The sequence spans 347 residues: MADTEDDNSALASFFPDPPLFWKAFTPSNLQAYAEIKQQYASQHGIPVEDVVRVPDLPADSDLIYLQPPAEPKDGTWRLYGEPQSLEESLQPLESAGIERLGPPLPGSTTTSTSNTQTTTTDSQSTTQPTTDDTQPTSAFPSQQPTSQLPLPPSSTSAPGGASSGASSTQTHDTLHLHLKRLSKSLLLNFLELLGIMSLDPAAGSQKAADLRTLFLNFHHVLNEYRPHQAREQLIQLMQERLDQTRAETAANRAVAEKARRVLEGLGSVEIPAVDDVNIAGTGTGGGDGEAGYGSAAVPVPVPVGARTGTTVGDRRVGVDGEGAEEEEKMYWEREGMGWGVLDAEFA.

2 disordered regions span residues 97–172 (GIER…TQTH) and 302–326 (VPVGARTGTTVGDRRVGVDGEGAEE). 2 stretches are compositionally biased toward low complexity: residues 108–171 (STTT…STQT) and 302–312 (VPVGARTGTTV).

It belongs to the Mediator complex subunit 7 family. Component of the Mediator complex.

It localises to the nucleus. Its function is as follows. Component of the Mediator complex, a coactivator involved in the regulated transcription of nearly all RNA polymerase II-dependent genes. Mediator functions as a bridge to convey information from gene-specific regulatory proteins to the basal RNA polymerase II transcription machinery. Mediator is recruited to promoters by direct interactions with regulatory proteins and serves as a scaffold for the assembly of a functional preinitiation complex with RNA polymerase II and the general transcription factors. This Neurospora crassa (strain ATCC 24698 / 74-OR23-1A / CBS 708.71 / DSM 1257 / FGSC 987) protein is Mediator of RNA polymerase II transcription subunit 7 (med-7).